A 391-amino-acid chain; its full sequence is MARVGILLLNLGGPERIQDVGPFLYNLFADPEIIRLPNPILQKPLAWLISTLRSSKSQEAYRSIGGGSPLRRITEQQARELQSLLRQRGVDATSYVAMRYWHPFTESAVADIKADGIDEVVVLPLYPHFSISTSGSSFRELQRLRQMDERFEALPLRCIRSWYDHPGYVRSMAELIAEQVRASDDVEHAHIFFSAHGVPKSYVEEAGDPYQQEIEACAALIMAELETIVGHSNPHTLAYQSRVGPVEWLKPYTEEALEELGRAKTQDLVVVPISFVSEHIETLEEIDIEYRELATESGVVNFRRVRALDTYPPFISGLADLVVASLEGPEVNLDQAAELPTTVKLYPQEKWEWGWNNSSEVWNGRLAMIGFSAFLLELISGHGPLHAVGLL.

Positions 196 and 281 each coordinate Fe cation.

Belongs to the ferrochelatase family.

It localises to the cytoplasm. It catalyses the reaction heme b + 2 H(+) = protoporphyrin IX + Fe(2+). It functions in the pathway porphyrin-containing compound metabolism; protoheme biosynthesis; protoheme from protoporphyrin-IX: step 1/1. Catalyzes the ferrous insertion into protoporphyrin IX. The chain is Ferrochelatase from Synechococcus sp. (strain CC9311).